The following is a 248-amino-acid chain: 3-deoxy-manno-octulosonate cytidylyltransferase (248 aa).

This sequence belongs to the KdsB family.

The protein resides in the cytoplasm. It carries out the reaction 3-deoxy-alpha-D-manno-oct-2-ulosonate + CTP = CMP-3-deoxy-beta-D-manno-octulosonate + diphosphate. Its pathway is nucleotide-sugar biosynthesis; CMP-3-deoxy-D-manno-octulosonate biosynthesis; CMP-3-deoxy-D-manno-octulosonate from 3-deoxy-D-manno-octulosonate and CTP: step 1/1. The protein operates within bacterial outer membrane biogenesis; lipopolysaccharide biosynthesis. Activates KDO (a required 8-carbon sugar) for incorporation into bacterial lipopolysaccharide in Gram-negative bacteria. The sequence is that of 3-deoxy-manno-octulosonate cytidylyltransferase from Shigella flexneri.